Reading from the N-terminus, the 288-residue chain is G1/S-specific cyclin-D2 (288 aa).

The Cyclin N-terminal domain occupies 26–151; the sequence is LQNLLTIEER…VLGKLKWNLA (126 aa). Residues 264 to 288 form a disordered region; it reads QHNGSKSVEDPDQATTPTDVRDVDL. The residue at position 270 (serine 270) is a Phosphoserine. Threonine 279 is modified (phosphothreonine).

Belongs to the cyclin family. Cyclin D subfamily. As to quaternary structure, interacts with either CDK4 or CDK6 protein kinase to form a serine/threonine kinase holoenzyme complex. The cyclin subunit imparts substrate specificity to the complex. Post-translationally, phosphorylation at Thr-279 by MAP kinases is required for ubiquitination and degradation by the DCX(AMBRA1) complex. In terms of processing, ubiquitinated by the DCX(AMBRA1) complex during the transition from G1 to S cell phase, leading to its degradation: ubiquitination is dependent on Thr-279 phosphorylation. The DCX(AMBRA1) complex represents the major regulator of CCND2 stability during the G1/S transition. Polyubiquitinated by the SCF(FBXL2) complex, leading to proteasomal degradation.

Its subcellular location is the nucleus. The protein localises to the cytoplasm. The protein resides in the nucleus membrane. Its function is as follows. Regulatory component of the cyclin D2-CDK4 (DC) complex that phosphorylates and inhibits members of the retinoblastoma (RB) protein family including RB1 and regulates the cell-cycle during G(1)/S transition. Phosphorylation of RB1 allows dissociation of the transcription factor E2F from the RB/E2F complex and the subsequent transcription of E2F target genes which are responsible for the progression through the G(1) phase. Hypophosphorylates RB1 in early G(1) phase. Cyclin D-CDK4 complexes are major integrators of various mitogenenic and antimitogenic signals. In Rattus norvegicus (Rat), this protein is G1/S-specific cyclin-D2 (Ccnd2).